Reading from the N-terminus, the 156-residue chain is Small ribosomal subunit protein uS7 (156 aa).

The protein belongs to the universal ribosomal protein uS7 family. Part of the 30S ribosomal subunit. Contacts proteins S9 and S11.

In terms of biological role, one of the primary rRNA binding proteins, it binds directly to 16S rRNA where it nucleates assembly of the head domain of the 30S subunit. Is located at the subunit interface close to the decoding center, probably blocks exit of the E-site tRNA. The chain is Small ribosomal subunit protein uS7 from Idiomarina loihiensis (strain ATCC BAA-735 / DSM 15497 / L2-TR).